Here is a 348-residue protein sequence, read N- to C-terminus: Fe(3+) ions import ATP-binding protein FbpC (348 aa).

The 231-residue stretch at 6 to 236 (LSLEGATVRF…PADAFVARFL (231 aa)) folds into the ABC transporter domain. Position 38 to 45 (38 to 45 (GPSGSGKS)) interacts with ATP.

Belongs to the ABC transporter superfamily. Fe(3+) ion importer (TC 3.A.1.10) family. In terms of assembly, the complex is composed of two ATP-binding proteins (FbpC), two transmembrane proteins (FbpB) and a solute-binding protein (FbpA).

The protein resides in the cell membrane. It catalyses the reaction Fe(3+)(out) + ATP + H2O = Fe(3+)(in) + ADP + phosphate + H(+). Its function is as follows. Part of the ABC transporter complex FbpABC involved in Fe(3+) ions import. Responsible for energy coupling to the transport system. The chain is Fe(3+) ions import ATP-binding protein FbpC from Streptomyces coelicolor (strain ATCC BAA-471 / A3(2) / M145).